The sequence spans 98 residues: SPbeta prophage-derived uncharacterized protein YorB (98 aa).

The polypeptide is SPbeta prophage-derived uncharacterized protein YorB (yorB) (Bacillus subtilis (strain 168)).